Reading from the N-terminus, the 549-residue chain is Cation/acetate symporter ActP (549 aa).

The Periplasmic portion of the chain corresponds to 1–32; sequence MKRVLTALAATLPFAANAADAISGAVERQPTN. The helical transmembrane segment at 33–55 threads the bilayer; it reads WQAIIMFLIFVVFTLGITYWASK. The Cytoplasmic portion of the chain corresponds to 56 to 75; sequence RVRSRNDYYTAGGNITGFQN. The chain crosses the membrane as a helical span at residues 76–98; the sequence is GLAIAGDYMSAASFLGISALVFT. At 99 to 102 the chain is on the periplasmic side; the sequence is SGYD. A helical transmembrane segment spans residues 103–125; the sequence is GLIYSLGFLVGWPIILFLIAERL. At 126–145 the chain is on the cytoplasmic side; it reads RNLGRYTFADVASYRLKQGP. Residues 146 to 168 form a helical membrane-spanning segment; that stretch reads IRILSACGSLVVVALYLIAQMVG. At 169-182 the chain is on the periplasmic side; that stretch reads AGKLIELLFGLNYH. Residues 183–205 traverse the membrane as a helical segment; sequence IAVVLVGVLMMMYVLFGGMLATT. Topologically, residues 206–211 are cytoplasmic; that stretch reads WVQIIK. A helical transmembrane segment spans residues 212 to 234; the sequence is AVLLLFGASFMAFMVMKHVGFSF. At 235 to 263 the chain is on the periplasmic side; it reads NNLFSEAMAVHPKGVDIMKPGGLVKDPIS. A helical transmembrane segment spans residues 264–286; sequence ALSLGLGLMFGTAGLPHILMHFF. The Cytoplasmic portion of the chain corresponds to 287–297; sequence TVSDAREARKS. The chain crosses the membrane as a helical span at residues 298 to 320; sequence VFYATGFMGYFYILTFIIGFGAI. Residues 321–358 are Periplasmic-facing; that stretch reads MLVGANPEYKDAAGHLIGGNNMAAVHLANAVGGNLFLG. The helical transmembrane segment at 359–381 threads the bilayer; the sequence is FISAVAFATILAVVAGLTLAGAS. Residues 382–401 lie on the Cytoplasmic side of the membrane; the sequence is AVSHDLYANVFKKGATEREE. The helical transmembrane segment at 402–424 threads the bilayer; the sequence is LRVSKITVLILGVIAIILGVLFE. Topologically, residues 425 to 427 are periplasmic; the sequence is NQN. Residues 428 to 450 traverse the membrane as a helical segment; the sequence is IAFMVGLAFAIAASCNFPIILLS. The Cytoplasmic portion of the chain corresponds to 451-461; the sequence is MYWSKLTTRGA. A helical transmembrane segment spans residues 462–484; sequence MLGGWLGLITAVVLMILGPTIWV. Over 485-493 the chain is Periplasmic; it reads QILGHEKAI. A helical membrane pass occupies residues 494–516; sequence FPYEYPALFSISVAFLGIWLFSA. The Cytoplasmic portion of the chain corresponds to 517–549; the sequence is TDNSAEGARERELFRAQFIRSQTGFGVEQGRAH.

This sequence belongs to the sodium:solute symporter (SSF) (TC 2.A.21) family.

Its subcellular location is the cell inner membrane. Transports acetate. This chain is Cation/acetate symporter ActP (actP), found in Escherichia coli O6:H1 (strain CFT073 / ATCC 700928 / UPEC).